We begin with the raw amino-acid sequence, 348 residues long: Uroporphyrinogen decarboxylase (348 aa).

Substrate-binding positions include 27-31, F46, D76, Y152, S207, and H320; that span reads RQAGR.

It belongs to the uroporphyrinogen decarboxylase family. In terms of assembly, homodimer.

The protein resides in the cytoplasm. The catalysed reaction is uroporphyrinogen III + 4 H(+) = coproporphyrinogen III + 4 CO2. It participates in porphyrin-containing compound metabolism; protoporphyrin-IX biosynthesis; coproporphyrinogen-III from 5-aminolevulinate: step 4/4. Its function is as follows. Catalyzes the decarboxylation of four acetate groups of uroporphyrinogen-III to yield coproporphyrinogen-III. The chain is Uroporphyrinogen decarboxylase from Bacillus cereus (strain B4264).